A 348-amino-acid polypeptide reads, in one-letter code: Phenylalanine--tRNA ligase alpha subunit (348 aa).

Glu-259 lines the Mg(2+) pocket.

This sequence belongs to the class-II aminoacyl-tRNA synthetase family. Phe-tRNA synthetase alpha subunit type 1 subfamily. As to quaternary structure, tetramer of two alpha and two beta subunits. It depends on Mg(2+) as a cofactor.

It is found in the cytoplasm. It carries out the reaction tRNA(Phe) + L-phenylalanine + ATP = L-phenylalanyl-tRNA(Phe) + AMP + diphosphate + H(+). In Limosilactobacillus reuteri (strain DSM 20016) (Lactobacillus reuteri), this protein is Phenylalanine--tRNA ligase alpha subunit.